The sequence spans 158 residues: Low molecular weight phosphotyrosine protein phosphatase (158 aa).

Position 2 is an N-acetylalanine (Ala-2). Catalysis depends on Cys-13, which acts as the Nucleophile. The active site involves Arg-19. Asp-130 serves as the catalytic Proton donor. Tyr-132 and Tyr-133 each carry phosphotyrosine.

The protein belongs to the low molecular weight phosphotyrosine protein phosphatase family. In terms of assembly, interacts with EPHA2; dephosphorylates EPHA2. Interacts with EPHB1. As to quaternary structure, interacts with the SH3 domain of SPTAN1. There is no interaction observed for isoform 2. In terms of processing, phosphorylated by LCK. Phosphorylation at Tyr-132 increases its phosphatase activity.

It is found in the cytoplasm. It carries out the reaction O-phospho-L-tyrosyl-[protein] + H2O = L-tyrosyl-[protein] + phosphate. The catalysed reaction is a phosphate monoester + H2O = an alcohol + phosphate. Its activity is regulated as follows. Inhibited by sulfhydryl reagents. In terms of biological role, acts on tyrosine phosphorylated proteins, low-MW aryl phosphates and natural and synthetic acyl phosphates with differences in substrate specificity between isoform 1 and isoform 2. The protein is Low molecular weight phosphotyrosine protein phosphatase of Rattus norvegicus (Rat).